The primary structure comprises 1601 residues: PH and SEC7 domain-containing protein (1601 aa).

The interval 1–340 (MSEELKVVLR…TGDLILNLSR (340 aa)) is mediates regulation of axon branching and microtubule organization. One can recognise a PDZ domain in the interval 6–88 (KVVLRRSEQH…LVTLELKRDP (83 aa)). Disordered regions lie at residues 113 to 192 (NIYD…SSTK), 211 to 322 (TSPT…PAKA), 339 to 440 (SRTP…SLTN), 459 to 657 (LEED…SSSG), 737 to 780 (NSSL…SETA), 872 to 965 (QQQQ…LLSC), and 1040 to 1126 (QQLK…SDVE). Residues 118–128 (HSSSTNSSPNH) are compositionally biased toward polar residues. Positions 166 to 191 (ASGSTTTTTTATHTHSHSRNSSASST) are enriched in low complexity. Positions 283 to 297 (QSLQHSNSYSGSPVT) are enriched in polar residues. Residues 300-311 (RFADREPEREPE) show a composition bias toward basic and acidic residues. Residues 323–340 (PRFEAYMMTGDLILNLSR) carry the Microtubule elimination domain (MTED); Binds tubulin and blocks microtubule polymerization motif. The segment covering 339 to 348 (SRTPQTSNPL) has biased composition (polar residues). Residues 353–362 (KKIDSLRDSP) show a composition bias toward basic and acidic residues. Composition is skewed to low complexity over residues 382-399 (SSPTSSSSVDSPTNTSSD), 409-424 (QKQQQQQQQTYQQQQQ), and 468-487 (QRQQQQRYRQQQNQQRYEYY). The span at 488–505 (QNEDELEEQEEVEEEREE) shows a compositional bias: acidic residues. The span at 510-519 (YDITNIETYQ) shows a compositional bias: polar residues. Acidic residues predominate over residues 526–557 (DDDDSDRQCLVDDDDDDDAYDDEENDAGDEDY). Polar residues-rich tracts occupy residues 558–567 (STNSLGSGSA) and 617–630 (TSFSVPTSPISLST). Residues 640–657 (SVPTSPEPSSLVPESSSG) are compositionally biased toward low complexity. Positions 737 to 747 (NSSLASNNNEG) are enriched in polar residues. Composition is skewed to low complexity over residues 752 to 780 (NRSSSSSSNSSDNNNCSSNTGEPATSETA), 872 to 942 (QQQQ…QQQQ), 949 to 965 (GGQVAQPPSGIPGLLSC), and 1040 to 1052 (QQLKQQLRAQQQQ). Residues 894–1601 (SSSPQHSAVG…PTNRKEKKKK (708 aa)) are mediates association to the membrane and rescricts the microtubule-inhibiting activity to the cell cortex. Over residues 1053–1071 (QRERERDRDRDREQSEHKV) the composition is skewed to basic and acidic residues. Residues 1125-1291 (VESLHSYHYS…KSLYQAIKTK (167 aa)) form the SEC7 domain. One can recognise a PH domain in the interval 1332–1445 (VEYKKGYVMR…WVETINYVCA (114 aa)). Residues 1544–1601 (LELQAQQPSPASHEEEADTFPVGTTACTPPTPQSINQKDQQKEQQQQQPTNRKEKKKK) are disordered. The span at 1568–1579 (TACTPPTPQSIN) shows a compositional bias: polar residues.

The protein belongs to the PSD family. In terms of assembly, interacts (via MTED motif) with tubulin. In terms of tissue distribution, expressed in the head (at protein level).

It is found in the cell projection. Its subcellular location is the axon. The protein localises to the cytoplasm. It localises to the cell membrane. The protein resides in the cell cortex. Guanine nucleotide exchange factor for Arf6. Regulates axon growth and branching by inhibiting microtubule polymerisation at the cortex. Together with shot, promotes axonal microtubule bundle integrity. Required for normal ethanol-induced tolerance and preference. Probably by activating Arf6, counteracts ethanol-induced sedation. In Drosophila melanogaster (Fruit fly), this protein is PH and SEC7 domain-containing protein.